Consider the following 313-residue polypeptide: Porphobilinogen deaminase (313 aa).

The residue at position 242 (Cys-242) is an S-(dipyrrolylmethanemethyl)cysteine.

Belongs to the HMBS family. In terms of assembly, monomer. Requires dipyrromethane as cofactor.

It catalyses the reaction 4 porphobilinogen + H2O = hydroxymethylbilane + 4 NH4(+). The protein operates within porphyrin-containing compound metabolism; protoporphyrin-IX biosynthesis; coproporphyrinogen-III from 5-aminolevulinate: step 2/4. Functionally, tetrapolymerization of the monopyrrole PBG into the hydroxymethylbilane pre-uroporphyrinogen in several discrete steps. This Escherichia coli O6:H1 (strain CFT073 / ATCC 700928 / UPEC) protein is Porphobilinogen deaminase.